Reading from the N-terminus, the 282-residue chain is NADPH-dependent 7-cyano-7-deazaguanine reductase (282 aa).

Substrate is bound at residue 88 to 90; sequence IES. Position 90-91 (90-91) interacts with NADPH; the sequence is SK. Catalysis depends on cysteine 190, which acts as the Thioimide intermediate. The active-site Proton donor is the aspartate 197. 229–230 is a substrate binding site; it reads HE. 258–259 lines the NADPH pocket; it reads RG.

Belongs to the GTP cyclohydrolase I family. QueF type 2 subfamily. In terms of assembly, homodimer.

Its subcellular location is the cytoplasm. The catalysed reaction is 7-aminomethyl-7-carbaguanine + 2 NADP(+) = 7-cyano-7-deazaguanine + 2 NADPH + 3 H(+). The protein operates within tRNA modification; tRNA-queuosine biosynthesis. Functionally, catalyzes the NADPH-dependent reduction of 7-cyano-7-deazaguanine (preQ0) to 7-aminomethyl-7-deazaguanine (preQ1). This chain is NADPH-dependent 7-cyano-7-deazaguanine reductase, found in Shigella dysenteriae serotype 1 (strain Sd197).